A 203-amino-acid polypeptide reads, in one-letter code: Glycerol-3-phosphate acyltransferase (203 aa).

The next 4 membrane-spanning stretches (helical) occupy residues 6 to 26 (LTLL…AVLV), 82 to 102 (AISL…PVFF), 118 to 138 (APIG…LVLI), and 141 to 161 (YSSL…WWLD).

Belongs to the PlsY family. In terms of assembly, probably interacts with PlsX.

Its subcellular location is the cell inner membrane. The enzyme catalyses an acyl phosphate + sn-glycerol 3-phosphate = a 1-acyl-sn-glycero-3-phosphate + phosphate. It participates in lipid metabolism; phospholipid metabolism. Its function is as follows. Catalyzes the transfer of an acyl group from acyl-phosphate (acyl-PO(4)) to glycerol-3-phosphate (G3P) to form lysophosphatidic acid (LPA). This enzyme utilizes acyl-phosphate as fatty acyl donor, but not acyl-CoA or acyl-ACP. The polypeptide is Glycerol-3-phosphate acyltransferase (Shewanella oneidensis (strain ATCC 700550 / JCM 31522 / CIP 106686 / LMG 19005 / NCIMB 14063 / MR-1)).